The sequence spans 299 residues: Regucalcin (299 aa).

A divalent metal cation is bound at residue Glu18. Substrate contacts are provided by Arg101, Asn103, and Glu121. Residue Lys144 is modified to N6-succinyllysine. Positions 154 and 204 each coordinate a divalent metal cation. Asp204 serves as the catalytic Proton donor/acceptor. N6-succinyllysine occurs at positions 244 and 253.

Belongs to the SMP-30/CGR1 family. In terms of assembly, monomer. The cofactor is Zn(2+). Mn(2+) is required as a cofactor. It depends on Ca(2+) as a cofactor. Requires Mg(2+) as cofactor.

Its subcellular location is the cytoplasm. It carries out the reaction D-glucono-1,5-lactone + H2O = D-gluconate + H(+). Gluconolactonase with low activity towards other sugar lactones, including gulonolactone and galactonolactone. Can also hydrolyze diisopropyl phosphorofluoridate and phenylacetate (in vitro). Calcium-binding protein. Modulates Ca(2+) signaling, and Ca(2+)-dependent cellular processes and enzyme activities. The polypeptide is Regucalcin (RGN) (Homo sapiens (Human)).